Consider the following 387-residue polypeptide: 3-ketoacyl-CoA thiolase (387 aa).

Residue Cys-91 is the Acyl-thioester intermediate of the active site. Catalysis depends on proton acceptor residues His-343 and Cys-373.

This sequence belongs to the thiolase-like superfamily. Thiolase family. Heterotetramer of two alpha chains (FadB) and two beta chains (FadA).

It localises to the cytoplasm. It catalyses the reaction an acyl-CoA + acetyl-CoA = a 3-oxoacyl-CoA + CoA. Its pathway is lipid metabolism; fatty acid beta-oxidation. Catalyzes the final step of fatty acid oxidation in which acetyl-CoA is released and the CoA ester of a fatty acid two carbons shorter is formed. The sequence is that of 3-ketoacyl-CoA thiolase from Shewanella baltica (strain OS155 / ATCC BAA-1091).